Here is a 272-residue protein sequence, read N- to C-terminus: Peptidoglycolipid exporter Gap (272 aa).

Helical transmembrane passes span 5-25 (ILGL…ILLV), 36-56 (VVFW…PLFV), 79-99 (IEPF…VIAL), 171-191 (LWVA…VLLV), 206-226 (IIAV…TLLS), and 252-272 (ILLV…LGVI).

Belongs to the peptidoglycolipid addressing protein (GAP) (TC 2.A.116) family.

Its subcellular location is the cell inner membrane. Its function is as follows. Required for the transport of peptidoglycolipids (GPLs) to the cell surface. The sequence is that of Peptidoglycolipid exporter Gap from Mycolicibacterium smegmatis (strain ATCC 700084 / mc(2)155) (Mycobacterium smegmatis).